The sequence spans 2222 residues: DNA polymerase epsilon catalytic subunit A (2222 aa).

Residues 90–110 (ETLSSGSNGGGNSNDGERVTT) are disordered. Zn(2+) is bound by residues Cys2108, Cys2111, Cys2130, and Cys2133. The segment at 2108–2133 (CEYCFFISDIDFCKAAPESIFSCVRC) adopts a CysA-type zinc-finger fold. The [4Fe-4S] cluster site is built by Cys2164, Cys2167, Cys2179, and Cys2181. The short motif at 2164–2181 (CSRCHKVKRDYMSAHCPC) is the CysB motif element.

Belongs to the DNA polymerase type-B family. As to quaternary structure, DNA polymerase epsilon is a heterotetramer consisting of POL2, DPB2, DPB3 and DPB4. [4Fe-4S] cluster is required as a cofactor.

It is found in the nucleus. It catalyses the reaction DNA(n) + a 2'-deoxyribonucleoside 5'-triphosphate = DNA(n+1) + diphosphate. In terms of biological role, catalytic component of the DNA polymerase epsilon complex which participates in chromosomal DNA replication. Required during synthesis of the leading DNA strands at the replication fork, binds at/or near replication origins and moves along DNA with the replication fork. Has 3'-5' proofreading exonuclease activity that corrects errors arising during DNA replication. The sequence is that of DNA polymerase epsilon catalytic subunit A (POL2) from Saccharomyces cerevisiae (strain ATCC 204508 / S288c) (Baker's yeast).